A 93-amino-acid chain; its full sequence is Alpha-defensin 5 (93 aa).

The N-terminal stretch at 1–19 (MKTFVLLSALVLLAFQVQA) is a signal peptide. Residues 20–58 (DPIHKTDEETNTEEQPGEEDQAVSISFGGQEGSALHEEL) constitute a propeptide that is removed on maturation. Intrachain disulfides connect Cys64–Cys92, Cys66–Cys81, and Cys71–Cys91.

Belongs to the alpha-defensin family.

It is found in the secreted. Its function is as follows. Probably contributes to the antimicrobial barrier function of the small bowel mucosa. The chain is Alpha-defensin 5 (Defa5) from Mus musculus (Mouse).